Consider the following 1381-residue polypeptide: Non-structural polyprotein 1AB (1381 aa).

Residues 121–160 (VLVQEHKKLDSDLKESRRELSQLKLEHSLLRHDYERLVRE) adopt a coiled-coil conformation. The next 5 membrane-spanning stretches (helical) occupy residues 169 to 189 (FKFSAVIFYAFFLGFLLMSAV), 249 to 269 (LALGYFPYFANWHMAAFLVGT), 279 to 299 (LYMLVTLVLATLSRFQLVALA), 324 to 344 (AFAILASVLISVLLLILCLAM), and 365 to 385 (FSHLVSFLHAPGWFTIIAILI). Catalysis depends on charge relay system; for serine protease activity residues His-477, Asp-506, and Ser-569. Tyr-694 carries the O-(5'-phospho-RNA)-tyrosine modification. A coiled-coil region spans residues 703–732 (TRDQLREMAEAAREADDDFDDYEEEKNEVD). Residues 856–879 (MQRKKQKPKKREEGPERGPINPDE) are disordered. The region spanning 1122 to 1254 (SVFIEFDWTR…TFDHVPPDYV (133 aa)) is the RdRp catalytic domain.

Belongs to the astroviridae polyprotein 1AB family. In terms of assembly, monomer. Cleaved by the viral and host proteases. The protease is probably autocatalytically cleaved.

Its subcellular location is the host membrane. The catalysed reaction is RNA(n) + a ribonucleoside 5'-triphosphate = RNA(n+1) + diphosphate. Functionally, responsible for the cleavage of the polyprotein into functional products. Its function is as follows. Protein covalently attached to the 5' extremity of the genomic and subgenomic RNAs. It may serve as a primer for the replicase. The chain is Non-structural polyprotein 1AB (ORF1) from Neovison vison (American mink).